Reading from the N-terminus, the 72-residue chain is Translation initiation factor IF-1 (72 aa).

One can recognise an S1-like domain in the interval 1-72; sequence MAKEDVIEVE…NRGRIVYRYK (72 aa).

It belongs to the IF-1 family. In terms of assembly, component of the 30S ribosomal translation pre-initiation complex which assembles on the 30S ribosome in the order IF-2 and IF-3, IF-1 and N-formylmethionyl-tRNA(fMet); mRNA recruitment can occur at any time during PIC assembly.

It is found in the cytoplasm. Its function is as follows. One of the essential components for the initiation of protein synthesis. Stabilizes the binding of IF-2 and IF-3 on the 30S subunit to which N-formylmethionyl-tRNA(fMet) subsequently binds. Helps modulate mRNA selection, yielding the 30S pre-initiation complex (PIC). Upon addition of the 50S ribosomal subunit IF-1, IF-2 and IF-3 are released leaving the mature 70S translation initiation complex. This is Translation initiation factor IF-1 from Moorella thermoacetica (strain ATCC 39073 / JCM 9320).